The sequence spans 125 residues: MWSVQQLLWGCRSLLTQGCRSFSLGSRDLRKMNFMPQPKNTDRWDHKRALYGVYDNIGILGDFKAHPRDLIIGPSWLRGWKGNELQRCIRKRQMVGPRMFYEDRENLNKRIRFLYKRFNRYGKHR.

The transit peptide at 1–29 directs the protein to the mitochondrion; it reads MWSVQQLLWGCRSLLTQGCRSFSLGSRDL.

It belongs to the mitochondrion-specific ribosomal protein mL51 family. As to quaternary structure, component of the mitochondrial ribosome large subunit (39S) which comprises a 16S rRNA and about 50 distinct proteins.

It localises to the mitochondrion. The protein is Large ribosomal subunit protein mL51 (mrpl51) of Xenopus tropicalis (Western clawed frog).